The primary structure comprises 151 residues: Arginine repressor (151 aa).

The protein belongs to the ArgR family.

The protein resides in the cytoplasm. It functions in the pathway amino-acid biosynthesis; L-arginine biosynthesis [regulation]. Functionally, regulates arginine biosynthesis genes. The polypeptide is Arginine repressor (Clostridium novyi (strain NT)).